The primary structure comprises 360 residues: 3-isopropylmalate dehydrogenase (360 aa).

Residue 76–89 coordinates NAD(+); sequence GPKWDTIERDIRPE. Substrate-binding residues include R96, R106, R134, and D224. Mg(2+)-binding residues include D224, D248, and D252. NAD(+) is bound at residue 282–294; that stretch reads GSAPDIAGKGIAN.

The protein belongs to the isocitrate and isopropylmalate dehydrogenases family. LeuB type 1 subfamily. In terms of assembly, homodimer. The cofactor is Mg(2+). It depends on Mn(2+) as a cofactor.

The protein localises to the cytoplasm. It catalyses the reaction (2R,3S)-3-isopropylmalate + NAD(+) = 4-methyl-2-oxopentanoate + CO2 + NADH. Its pathway is amino-acid biosynthesis; L-leucine biosynthesis; L-leucine from 3-methyl-2-oxobutanoate: step 3/4. Catalyzes the oxidation of 3-carboxy-2-hydroxy-4-methylpentanoate (3-isopropylmalate) to 3-carboxy-4-methyl-2-oxopentanoate. The product decarboxylates to 4-methyl-2 oxopentanoate. This Pseudomonas fluorescens (strain Pf0-1) protein is 3-isopropylmalate dehydrogenase.